Reading from the N-terminus, the 47-residue chain is Diuretic hormone 2 (47 aa).

Belongs to the sauvagine/corticotropin-releasing factor/urotensin I family.

It localises to the secreted. In terms of biological role, stimulates fluid secretion by the Malpighian tubules. Increases cyclic AMP production in Malpighian tubules. The polypeptide is Diuretic hormone 2 (Tenebrio molitor (Yellow mealworm beetle)).